A 414-amino-acid polypeptide reads, in one-letter code: Alanine--glyoxylate aminotransferase (414 aa).

A mitochondrion-targeting transit peptide spans Met-1–Met-23. At Lys-231 the chain carries N6-(pyridoxal phosphate)lysine. Residue Lys-247 is modified to N6-acetyllysine; alternate. Lys-247 is modified (N6-succinyllysine; alternate). Residue Lys-256 is modified to N6-acetyllysine. N6-acetyllysine; alternate is present on Lys-330. Residue Lys-330 is modified to N6-succinyllysine; alternate. At Lys-334 the chain carries N6-acetyllysine. Substrate is bound at residue Arg-382. Positions Asn-412 to Leu-414 match the Microbody targeting signal motif.

It belongs to the class-V pyridoxal-phosphate-dependent aminotransferase family. Homodimer. The cofactor is pyridoxal 5'-phosphate.

It localises to the peroxisome. Its subcellular location is the mitochondrion matrix. The enzyme catalyses L-serine + pyruvate = 3-hydroxypyruvate + L-alanine. It carries out the reaction glyoxylate + L-alanine = glycine + pyruvate. Functionally, catalyzes the transamination of glyoxylate to glycine and contributes to the glyoxylate detoxification. Its function is as follows. Catalyzes the transamination between L-serine and pyruvate and weakly contributes to gluconeogenesis from the L-serine metabolism. This Mus musculus (Mouse) protein is Alanine--glyoxylate aminotransferase.